Here is a 293-residue protein sequence, read N- to C-terminus: Mating-type protein A-1 (293 aa).

Positions Ala-42–Arg-97 form a DNA-binding region, alpha box.

Belongs to the MATALPHA1 family.

The protein localises to the nucleus. Functionally, mating type proteins are sequence specific DNA-binding proteins that act as master switches in yeast differentiation by controlling gene expression in a cell type-specific fashion. Transcriptional activator that induces the transcription of A-specific genes like mating factor ccg-4. Required for mating as an A-cell and for blocking of heterokaryon formation (vegetative incompatibility). The chain is Mating-type protein A-1 (mtA-1) from Neurospora crassa (strain ATCC 24698 / 74-OR23-1A / CBS 708.71 / DSM 1257 / FGSC 987).